The sequence spans 123 residues: Large ribosomal subunit protein bL21 (123 aa).

This sequence belongs to the bacterial ribosomal protein bL21 family. Part of the 50S ribosomal subunit. Contacts protein L20.

In terms of biological role, this protein binds to 23S rRNA in the presence of protein L20. The protein is Large ribosomal subunit protein bL21 of Rippkaea orientalis (strain PCC 8801 / RF-1) (Cyanothece sp. (strain PCC 8801)).